Consider the following 267-residue polypeptide: Eukaryotic translation initiation factor 3 subunit K (267 aa).

Positions phenylalanine 46–arginine 233 constitute a PCI domain.

This sequence belongs to the eIF-3 subunit K family. Component of the eukaryotic translation initiation factor 3 (eIF-3) complex.

It is found in the cytoplasm. In terms of biological role, component of the eukaryotic translation initiation factor 3 (eIF-3) complex, which is involved in protein synthesis of a specialized repertoire of mRNAs and, together with other initiation factors, stimulates binding of mRNA and methionyl-tRNAi to the 40S ribosome. The eIF-3 complex specifically targets and initiates translation of a subset of mRNAs involved in cell proliferation. This Aspergillus niger (strain ATCC MYA-4892 / CBS 513.88 / FGSC A1513) protein is Eukaryotic translation initiation factor 3 subunit K.